The sequence spans 396 residues: Elongation factor Tu (396 aa).

Residues 10–206 (KPHVNIGTIG…AVDSYIPDPE (197 aa)) enclose the tr-type G domain. The G1 stretch occupies residues 19-26 (GHVDHGKT). 19–26 (GHVDHGKT) provides a ligand contact to GTP. Threonine 26 contributes to the Mg(2+) binding site. Residues 60–64 (GITIA) are G2. Positions 81–84 (DCPG) are G3. GTP contacts are provided by residues 81–85 (DCPGH) and 136–139 (NKAD). The G4 stretch occupies residues 136-139 (NKAD). Positions 174–176 (SAL) are G5.

The protein belongs to the TRAFAC class translation factor GTPase superfamily. Classic translation factor GTPase family. EF-Tu/EF-1A subfamily. Monomer.

It is found in the cytoplasm. The enzyme catalyses GTP + H2O = GDP + phosphate + H(+). Functionally, GTP hydrolase that promotes the GTP-dependent binding of aminoacyl-tRNA to the A-site of ribosomes during protein biosynthesis. The protein is Elongation factor Tu of Pelobacter propionicus (strain DSM 2379 / NBRC 103807 / OttBd1).